The sequence spans 296 residues: Glycine--tRNA ligase alpha subunit (296 aa).

This sequence belongs to the class-II aminoacyl-tRNA synthetase family. In terms of assembly, tetramer of two alpha and two beta subunits.

Its subcellular location is the cytoplasm. The catalysed reaction is tRNA(Gly) + glycine + ATP = glycyl-tRNA(Gly) + AMP + diphosphate. The sequence is that of Glycine--tRNA ligase alpha subunit from Listeria monocytogenes serotype 4a (strain HCC23).